The chain runs to 28 residues: U-actitoxin-Ate1 (28 aa).

Positions 1 to 15 are cleaved as a signal peptide; the sequence is MSLILIFFAFTVLKS. An intrachain disulfide couples cysteine 20 to cysteine 26.

In terms of assembly, monomer in solution. May be N-glycosylated at Asn-22. Activity with this modification has not be tested. As to expression, highly expressed in the tentacles. Weakly expressed in acrorhagi and mesenteric filaments.

Its subcellular location is the secreted. It is found in the nematocyst. Functionally, probable toxin expected to be employed in prey capture and/or defense against predators (based on its abundance in tentacles). Has only a weak affinity for lipid membranes. Shows moderate cytotoxic activity against breast cancer cell lines (MCF-7 and MDA-MB-231). This is U-actitoxin-Ate1 from Actinia tenebrosa (Australian red waratah sea anemone).